The chain runs to 300 residues: tRNA dimethylallyltransferase 1 (300 aa).

Residue 10–17 (GPTGVGKT) coordinates ATP. Residue 12-17 (TGVGKT) participates in substrate binding. An interaction with substrate tRNA region spans residues 35–38 (DSRQ).

This sequence belongs to the IPP transferase family. Monomer. Mg(2+) is required as a cofactor.

The enzyme catalyses adenosine(37) in tRNA + dimethylallyl diphosphate = N(6)-dimethylallyladenosine(37) in tRNA + diphosphate. Its function is as follows. Catalyzes the transfer of a dimethylallyl group onto the adenine at position 37 in tRNAs that read codons beginning with uridine, leading to the formation of N6-(dimethylallyl)adenosine (i(6)A). This is tRNA dimethylallyltransferase 1 from Phocaeicola vulgatus (strain ATCC 8482 / DSM 1447 / JCM 5826 / CCUG 4940 / NBRC 14291 / NCTC 11154) (Bacteroides vulgatus).